A 233-amino-acid polypeptide reads, in one-letter code: uncharacterized protein (233 aa).

Belongs to the asfivirus H233R family.

This is an uncharacterized protein from African swine fever virus (isolate Warthog/Namibia/Wart80/1980) (ASFV).